Here is a 688-residue protein sequence, read N- to C-terminus: Elongation factor G (688 aa).

The region spanning 8–282 (EKTRNIGIMA…AIIDYLPSPM (275 aa)) is the tr-type G domain. GTP is bound by residues 17-24 (AHIDAGKT), 81-85 (DTPGH), and 135-138 (NKMD).

It belongs to the TRAFAC class translation factor GTPase superfamily. Classic translation factor GTPase family. EF-G/EF-2 subfamily.

The protein localises to the cytoplasm. Functionally, catalyzes the GTP-dependent ribosomal translocation step during translation elongation. During this step, the ribosome changes from the pre-translocational (PRE) to the post-translocational (POST) state as the newly formed A-site-bound peptidyl-tRNA and P-site-bound deacylated tRNA move to the P and E sites, respectively. Catalyzes the coordinated movement of the two tRNA molecules, the mRNA and conformational changes in the ribosome. The sequence is that of Elongation factor G from Phytoplasma mali (strain AT).